Consider the following 163-residue polypeptide: Secreted RxLR effector protein 135 (163 aa).

The N-terminal stretch at 1–20 is a signal peptide; the sequence is MRRLYLFVLILATFLTTSHG. A RxLR-dEER motif is present at residues 33–45; sequence RGLQEEAGEDEER. Residues 94–127 form a disordered region; it reads KNAGKPKRQTPQIAATGPAKPKVQSPEEAAAVPG.

This sequence belongs to the RxLR effector family.

The protein resides in the secreted. The protein localises to the host nucleus. It localises to the host cytoplasm. Functionally, secreted effector that completely suppresses the host cell death induced by cell death-inducing proteins. The chain is Secreted RxLR effector protein 135 from Plasmopara viticola (Downy mildew of grapevine).